Here is a 109-residue protein sequence, read N- to C-terminus: Nucleoid-associated protein MADE_1013280 (109 aa).

Residues 86–109 (TSKEKMGDVTGGMPLPPGFKMPGF) are disordered. Positions 99 to 109 (PLPPGFKMPGF) are enriched in pro residues.

Belongs to the YbaB/EbfC family. In terms of assembly, homodimer.

It localises to the cytoplasm. It is found in the nucleoid. Binds to DNA and alters its conformation. May be involved in regulation of gene expression, nucleoid organization and DNA protection. This chain is Nucleoid-associated protein MADE_1013280, found in Alteromonas mediterranea (strain DSM 17117 / CIP 110805 / LMG 28347 / Deep ecotype).